The chain runs to 1405 residues: Protein crumbs homolog 1 (1405 aa).

The signal sequence occupies residues 1–27; the sequence is MKLKRTAYLLFLYLSSSLLICIKNSFC. Residues 28-1339 are Extracellular-facing; that stretch reads NKNNTRCLSG…RCELDLADDR (1312 aa). The EGF-like 1; atypical domain maps to 30-67; it reads NNTRCLSGPCQNNSTCKHFPQDNNCCLDTANNLDKDCE. Disulfide bonds link Cys34–Cys45, Cys39–Cys54, Cys55–Cys66, Cys73–Cys84, Cys78–Cys95, Cys97–Cys106, Cys113–Cys124, Cys118–Cys133, Cys135–Cys144, Cys151–Cys162, Cys156–Cys171, Cys173–Cys182, Cys189–Cys200, Cys194–Cys209, Cys211–Cys220, Cys227–Cys238, Cys232–Cys247, Cys249–Cys258, Cys265–Cys276, Cys270–Cys285, Cys287–Cys297, Cys304–Cys315, Cys309–Cys324, Cys326–Cys335, Cys342–Cys353, Cys347–Cys382, Cys384–Cys393, Cys400–Cys411, Cys405–Cys420, Cys422–Cys437, Cys444–Cys455, Cys449–Cys468, and Cys470–Cys479. Asn41 carries N-linked (GlcNAc...) asparagine glycosylation. EGF-like domains follow at residues 69 to 107 and 109 to 145; these read LKDPCFSSPCQGIATCVKIPGEGNFLCQCPPGYSGLNCE and ATNSCGGNLCQHGGTCRKDPEHPVCICPPGYAGRFCE. The 37-residue stretch at 147-183 folds into the EGF-like 4; calcium-binding domain; the sequence is DHNECASSPCHNGAMCQDGINGYSCFCVPGYQGRHCD. The EGF-like 5; calcium-binding domain maps to 185–221; the sequence is EVDECVSDPCKNEAVCLNEIGRYTCVCPQEFSGVNCE. One can recognise an EGF-like 6; calcium-binding domain in the interval 223 to 259; that stretch reads EIDECRSQPCLHGATCQDAPGGYSCDCAPGFLGEHCE. 5 EGF-like domains span residues 261 to 298, 300 to 336, 338 to 394, 396 to 438, and 440 to 480; these read SVNECESQPCLHGGLCVDGRNSYHCDCTGSGFTGMHCE, LIPLCWSKPCHNDATCEDTVDSYICHCRPGYTGALCE, DINE…IHCE, DVDE…ENCS, and ILLG…PLCE. The Laminin G-like 1 domain maps to 482–669; that stretch reads VTTLSFGSNG…GLSSNVKAGC (188 aa). N-linked (GlcNAc...) asparagine glycosylation is found at Asn560 and Asn656. Cystine bridges form between Cys641-Cys669, Cys675-Cys686, Cys680-Cys695, and Cys697-Cys706. The 37-residue stretch at 671 to 707 folds into the EGF-like 12 domain; it reads GKDWCESQPCQNRGRCINLWQGYQCECDRPYTGSNCL. Positions 713–884 constitute a Laminin G-like 2 domain; sequence GRFGQDDSTG…PILVNVTQGC (172 aa). 2 N-linked (GlcNAc...) asparagine glycosylation sites follow: Asn756 and Asn879. 6 cysteine pairs are disulfide-bonded: Cys850-Cys884, Cys890-Cys901, Cys895-Cys910, Cys912-Cys921, Cys927-Cys938, and Cys932-Cys947. EGF-like domains follow at residues 886–922 and 923–959; these read GDNTCKSNPCHNGGVCHSLWDDFSCSCPTNTAGRACE and QVQWCQLSPCPPTAECQLLPQGFECIANAVFSGLSRE. The region spanning 950–1136 is the Laminin G-like 3 domain; that stretch reads NAVFSGLSRE…VSTNMVLTGC (187 aa). Asn967, Asn974, and Asn999 each carry an N-linked (GlcNAc...) asparagine glycan. 16 cysteine pairs are disulfide-bonded: Cys1095/Cys1136, Cys1142/Cys1153, Cys1147/Cys1162, Cys1164/Cys1173, Cys1180/Cys1190, Cys1185/Cys1199, Cys1201/Cys1210, Cys1217/Cys1228, Cys1222/Cys1237, Cys1239/Cys1248, Cys1258/Cys1273, Cys1267/Cys1282, Cys1284/Cys1293, Cys1300/Cys1311, Cys1305/Cys1320, and Cys1322/Cys1331. Positions 1138–1174 constitute an EGF-like 15 domain; that stretch reads PSNACHSSPCLHGGNCEDSYSSYRCACLSGWSGTHCE. The EGF-like 16; calcium-binding domain occupies 1176 to 1211; that stretch reads NIDECFSSPCIHGNCSDGVAAYHCRCEPGYTGVNCE. Asn1189 is a glycosylation site (N-linked (GlcNAc...) asparagine). 2 consecutive EGF-like domains span residues 1213–1249 and 1254–1294; these read DVDNCKSHQCANGATCVPEAHGYSCLCFGNFTGRFCR and PSTV…EWCE. 2 N-linked (GlcNAc...) asparagine glycosylation sites follow: Asn1242 and Asn1264. The region spanning 1296–1332 is the EGF-like 19; calcium-binding domain; it reads DINECASDPCINGGLCRDLVNRFLCICDVAFAGERCE. A helical membrane pass occupies residues 1340–1360; that stretch reads LLGIFTAVGSGTLALFFILLL. Residues 1361–1405 lie on the Cytoplasmic side of the membrane; sequence AGVASLIASNKRATQGTYSPSGQEKAGPRVEMWIRMPPPALERLI.

The protein belongs to the Crumbs protein family. As to quaternary structure, component of a complex composed of PALS1, CRB1 and EPB41L5. Within the complex, interacts (via intracellular domain) with PALS1 and EPB41L5 (via FERM domain). Forms a complex with MPP4 and PALS1. Interacts with MPDZ/MUPP1 and MPP4. Post-translationally, glycosylated. Expressed in the kidney, lung, stomach and testis. Expressed in the brain. Expressed in the retina of the eye. Expressed in the outer nuclear layer, photoreceptor layer and inner nuclear layer of the retina. Expressed in Mueller cell radial processes in the inner nuclear layer, in apical processes sclerad to the external limiting membrane, and in the subapical region, adjacent to the adherens junction of retinal photoreceptors. In the brain, expressed in the granular layer of the cerebellum, the hippocampal dentate gyrus, the olfactory bulbs, the subventricular region lining the telencephalic ventricles and the rostral migratory stream. As to expression, ubiquitously expressed.

It is found in the apical cell membrane. The protein resides in the secreted. It localises to the cell projection. Its subcellular location is the cilium. The protein localises to the photoreceptor outer segment. It is found in the photoreceptor inner segment. The protein resides in the cytoplasm. It localises to the cell junction. Its subcellular location is the focal adhesion. Plays a role in photoreceptor morphogenesis in the retina. May maintain cell polarization and adhesion. Its function is as follows. May play a role in epidermal tissue morphogenesis. May function in cell attachment for stratified epithelial organization. This Mus musculus (Mouse) protein is Protein crumbs homolog 1 (Crb1).